The following is a 90-amino-acid chain: Probable Fe(2+)-trafficking protein (90 aa).

This sequence belongs to the Fe(2+)-trafficking protein family.

Its function is as follows. Could be a mediator in iron transactions between iron acquisition and iron-requiring processes, such as synthesis and/or repair of Fe-S clusters in biosynthetic enzymes. The chain is Probable Fe(2+)-trafficking protein from Vibrio campbellii (strain ATCC BAA-1116).